A 337-amino-acid polypeptide reads, in one-letter code: Perakine reductase (337 aa).

Tyrosine 57 acts as the Proton donor in catalysis. Substrate is bound at residue histidine 126. Residue 205–214 (SPIGRGLFAG) coordinates NADP(+).

The protein belongs to the aldo/keto reductase family.

The catalysed reaction is raucaffrinoline + NADP(+) = perakine + NADPH + H(+). Its function is as follows. Aldo-keto reductase involved in the biosynthesis of monoterpenoid indole alkaloids. Broad substrate specificity enzyme with a high selectivity in the group of alkaloids. Can use perakine, 19(S),20(R)-dihydro-peraksine-17,21-al, cinnamic aldehyde, p-coumaric aldehyde and 3-(3,4,5-trimethoxyphenyl)propanal as substrates, but not ketosteroids such as progesterone. NADPH could not be replaced by NADH. In Rauvolfia serpentina (Serpentine wood), this protein is Perakine reductase (PR).